The following is a 262-amino-acid chain: Ribosome maturation factor RimP (262 aa).

The interval 197 to 262 (RELGVLPPPP…LGQTDPTEGD (66 aa)) is disordered. Residues 223–233 (KLPKAKLKAAK) show a composition bias toward basic residues. Residues 240–254 (TKEHRLAAAERKRLG) are compositionally biased toward basic and acidic residues.

This sequence belongs to the RimP family.

The protein resides in the cytoplasm. Functionally, required for maturation of 30S ribosomal subunits. This Rhodopseudomonas palustris (strain BisB18) protein is Ribosome maturation factor RimP.